Reading from the N-terminus, the 508-residue chain is MAP kinase kinase MKK1/SSP32 (508 aa).

3 disordered regions span residues 1–21, 35–95, and 130–158; these read MASL…PRLK, IYLT…LSIN, and ELSG…YLRN. The segment covering 35–47 has biased composition (polar residues); it reads IYLTSNGSSTTAY. The span at 48–66 shows a compositional bias: low complexity; it reads SSHTPEPLTSSTSTLFSQT. Composition is skewed to polar residues over residues 67–79 and 131–158; these read RLHP…TLNT and LSGN…YLRN. Position 192 is a phosphoserine (S192). Positions 221–488 constitute a Protein kinase domain; that stretch reads IETLGILGEG…PRQMINHPWI (268 aa). Residues 227 to 235 and K250 each bind ATP; that span reads LGEGAGGSV. D349 (proton acceptor) is an active-site residue.

The protein belongs to the protein kinase superfamily. STE Ser/Thr protein kinase family. MAP kinase kinase subfamily.

It catalyses the reaction L-seryl-[protein] + ATP = O-phospho-L-seryl-[protein] + ADP + H(+). It carries out the reaction L-threonyl-[protein] + ATP = O-phospho-L-threonyl-[protein] + ADP + H(+). The enzyme catalyses L-tyrosyl-[protein] + ATP = O-phospho-L-tyrosyl-[protein] + ADP + H(+). In terms of biological role, involved in a signal transduction pathway that play a role in yeast cell morphogenesis and cell growth. This pathway seems to start by SMP3; then involve the kinase PKC1 that may act on the BCK1 kinase that then phosphorylates MKK1 and MKK2 which themselves phosphorylate the MPK1 kinase. The polypeptide is MAP kinase kinase MKK1/SSP32 (MKK1) (Saccharomyces cerevisiae (strain ATCC 204508 / S288c) (Baker's yeast)).